The sequence spans 100 residues: UPF0125 protein HD_1828 (100 aa).

The protein belongs to the UPF0125 (RnfH) family.

The protein is UPF0125 protein HD_1828 of Haemophilus ducreyi (strain 35000HP / ATCC 700724).